The following is a 168-amino-acid chain: Protein GRIM REAPER (168 aa).

An N-terminal signal peptide occupies residues 1 to 30 (MVIKIPNTFIKATSLLSLILYFLIIATSKS). A glycan (N-linked (GlcNAc...) asparagine) is linked at Asn-59.

This sequence belongs to the STIG1 family. As to quaternary structure, interacts with PRK5 and to a lower extent with PRK4. In terms of tissue distribution, highly expressed in flowers, and at very low levels in leaves.

The protein resides in the secreted. It localises to the extracellular space. Its subcellular location is the apoplast. In terms of biological role, involved in the regulation of cell death induced by extracellular reactive oxygen species. Only the processed peptide, and not the full length GRI can bind in vivo to the extracellular domain of the receptor PRK5. The GRIp-induced cell death is superoxide and salicylic acid dependent. The protein is Protein GRIM REAPER of Arabidopsis thaliana (Mouse-ear cress).